A 383-amino-acid chain; its full sequence is 8-amino-7-oxononanoate synthase (383 aa).

Substrate-binding residues include Arg27 and Arg34. 114–115 (GY) provides a ligand contact to pyridoxal 5'-phosphate. His139 serves as a coordination point for substrate. Residues Ser187, 212–215 (DDAH), and 232–235 (TLSK) each bind pyridoxal 5'-phosphate. At Lys235 the chain carries N6-(pyridoxal phosphate)lysine. Thr344 is a binding site for substrate.

The protein belongs to the class-II pyridoxal-phosphate-dependent aminotransferase family. BioF subfamily. In terms of assembly, homodimer. Pyridoxal 5'-phosphate is required as a cofactor.

The catalysed reaction is 6-carboxyhexanoyl-[ACP] + L-alanine + H(+) = (8S)-8-amino-7-oxononanoate + holo-[ACP] + CO2. It functions in the pathway cofactor biosynthesis; biotin biosynthesis. In terms of biological role, catalyzes the decarboxylative condensation of pimeloyl-[acyl-carrier protein] and L-alanine to produce 8-amino-7-oxononanoate (AON), [acyl-carrier protein], and carbon dioxide. In Methylorubrum extorquens (strain CM4 / NCIMB 13688) (Methylobacterium extorquens), this protein is 8-amino-7-oxononanoate synthase.